We begin with the raw amino-acid sequence, 253 residues long: Transposase for insertion sequence element IS904 (253 aa).

The Integrase catalytic domain occupies 90–253 (KATAPNKVWL…SPKDFEKYNS (164 aa)).

It belongs to the transposase IS3/IS150/IS904 family.

Functionally, involved in the transposition of the insertion sequence. This is Transposase for insertion sequence element IS904 (nisX1) from Lactococcus lactis subsp. lactis (strain IL1403) (Streptococcus lactis).